The chain runs to 247 residues: MTILFLTMVISYFGCMKAAPMKEANVRGQGSLAYPGVRTHGTLESVNGPKAGSRGLTSLADTFEHVIEELLDEDQKVRPSEENNKDADLYTSRVMLSSQVPLEPPLLFLLEEYKNYLDAANMSMRVRRHSDPTRRGELSVCDSISEWVTAADKKTAVDMSGGTVTVLEKVPVSKGQLKQYFYETKCNPMGYTKEGCRGIDKRHWNSQCRTTQSYVRALTMDSKKRIGWRFIRIDTSCVCTLTIKRGR.

The first 18 residues, M1–A18, serve as a signal peptide directing secretion. Residues A19–R128 constitute a propeptide that is removed on maturation. The N-linked (GlcNAc...) asparagine glycan is linked to N121. 3 disulfides stabilise this stretch: C141-C208, C186-C237, and C196-C239.

Belongs to the NGF-beta family. As to quaternary structure, monomers and homodimers. Binds to NTRK2/TRKB. Can form heterodimers with other neurotrophin family members, such as NTF3 and NTF4 (in vitro), but the physiological relevance of this is not clear. BDNF precursor form: interacts with the heterodimer formed by NGFR and SORCS2. Mature BDNF has much lower affinity for the heterodimer formed by NGFR and SORCS2. Post-translationally, N-glycosylated and glycosulfated, contrary to mature BDNF. Mature BDNF is produced by proteolytic removal of the propeptide, catalyzed by a FURIN family member. In addition, the precursor form is proteolytically cleaved within the propeptide, but this is not an obligatory intermediate for the production of mature BDNF. Can be converted into mature BDNF by plasmin (PLG).

The protein resides in the secreted. In terms of biological role, important signaling molecule that activates signaling cascades downstream of NTRK2. During development, promotes the survival and differentiation of selected neuronal populations of the peripheral and central nervous systems. Participates in axonal growth, pathfinding and in the modulation of dendritic growth and morphology. Major regulator of synaptic transmission and plasticity at adult synapses in many regions of the CNS. The versatility of BDNF is emphasized by its contribution to a range of adaptive neuronal responses including long-term potentiation (LTP), long-term depression (LTD), certain forms of short-term synaptic plasticity, as well as homeostatic regulation of intrinsic neuronal excitability. Important signaling molecule that activates signaling cascades downstream of NTRK2. Activates signaling cascades via the heterodimeric receptor formed by NGFR and SORCS2. Signaling via NGFR and SORCS2 plays a role in synaptic plasticity and long-term depression (LTD). Binding to NGFR and SORCS2 promotes neuronal apoptosis. Promotes neuronal growth cone collapse. This chain is Neurotrophic factor BDNF precursor form (BDNF), found in Ursus arctos (Brown bear).